A 507-amino-acid polypeptide reads, in one-letter code: Lysine--tRNA ligase (507 aa).

The 'HIGH' region signature appears at 26-34 (PSGPIHVGN). Positions 270–274 (AMHSS) match the 'KMSKS' region motif.

Belongs to the class-I aminoacyl-tRNA synthetase family.

It is found in the cytoplasm. It catalyses the reaction tRNA(Lys) + L-lysine + ATP = L-lysyl-tRNA(Lys) + AMP + diphosphate. This Thermoplasma acidophilum (strain ATCC 25905 / DSM 1728 / JCM 9062 / NBRC 15155 / AMRC-C165) protein is Lysine--tRNA ligase (lysS).